The primary structure comprises 274 residues: Thiazole synthase (274 aa).

The active-site Schiff-base intermediate with DXP is K115. 1-deoxy-D-xylulose 5-phosphate contacts are provided by residues G176, 202–203, and 224–225; these read AG and NS.

Belongs to the ThiG family. As to quaternary structure, homotetramer. Forms heterodimers with either ThiH or ThiS.

It is found in the cytoplasm. The enzyme catalyses [ThiS sulfur-carrier protein]-C-terminal-Gly-aminoethanethioate + 2-iminoacetate + 1-deoxy-D-xylulose 5-phosphate = [ThiS sulfur-carrier protein]-C-terminal Gly-Gly + 2-[(2R,5Z)-2-carboxy-4-methylthiazol-5(2H)-ylidene]ethyl phosphate + 2 H2O + H(+). Its pathway is cofactor biosynthesis; thiamine diphosphate biosynthesis. Its function is as follows. Catalyzes the rearrangement of 1-deoxy-D-xylulose 5-phosphate (DXP) to produce the thiazole phosphate moiety of thiamine. Sulfur is provided by the thiocarboxylate moiety of the carrier protein ThiS. In vitro, sulfur can be provided by H(2)S. The sequence is that of Thiazole synthase from Psychrobacter arcticus (strain DSM 17307 / VKM B-2377 / 273-4).